Here is a 61-residue protein sequence, read N- to C-terminus: Large ribosomal subunit protein uL29 (61 aa).

Belongs to the universal ribosomal protein uL29 family.

The polypeptide is Large ribosomal subunit protein uL29 (Xanthomonas campestris pv. campestris (strain 8004)).